A 68-amino-acid chain; its full sequence is uncharacterized protein (68 aa).

One can recognise an HMA domain in the interval 2–67 (KTITLNIKGI…VIEDAGFDAT (66 aa)). A metal cation is bound by residues Cys13 and Cys16.

This is an uncharacterized protein from Haemophilus influenzae (strain ATCC 51907 / DSM 11121 / KW20 / Rd).